Consider the following 545-residue polypeptide: CTP synthase (545 aa).

The tract at residues 1–266 (MATNYIFVTG…DDIVTKRFNL (266 aa)) is amidoligase domain. S14 serves as a coordination point for CTP. Position 14 (S14) interacts with UTP. ATP is bound by residues 15–20 (SLGKGI) and D72. Mg(2+)-binding residues include D72 and E140. Residues 147–149 (DIE), 187–192 (KTKPTQ), and K223 contribute to the CTP site. UTP contacts are provided by residues 187 to 192 (KTKPTQ) and K223. Residue 239–241 (RDV) participates in ATP binding. Residues 291–542 (TVGFVGKYVE…IEAAGEFHKE (252 aa)) enclose the Glutamine amidotransferase type-1 domain. G352 contributes to the L-glutamine binding site. C379 acts as the Nucleophile; for glutamine hydrolysis in catalysis. Residues 380 to 383 (LGMQ), E403, and R470 contribute to the L-glutamine site. Residues H515 and E517 contribute to the active site.

The protein belongs to the CTP synthase family. As to quaternary structure, homotetramer.

It carries out the reaction UTP + L-glutamine + ATP + H2O = CTP + L-glutamate + ADP + phosphate + 2 H(+). The catalysed reaction is L-glutamine + H2O = L-glutamate + NH4(+). The enzyme catalyses UTP + NH4(+) + ATP = CTP + ADP + phosphate + 2 H(+). It functions in the pathway pyrimidine metabolism; CTP biosynthesis via de novo pathway; CTP from UDP: step 2/2. With respect to regulation, allosterically activated by GTP, when glutamine is the substrate; GTP has no effect on the reaction when ammonia is the substrate. The allosteric effector GTP functions by stabilizing the protein conformation that binds the tetrahedral intermediate(s) formed during glutamine hydrolysis. Inhibited by the product CTP, via allosteric rather than competitive inhibition. Catalyzes the ATP-dependent amination of UTP to CTP with either L-glutamine or ammonia as the source of nitrogen. Regulates intracellular CTP levels through interactions with the four ribonucleotide triphosphates. The sequence is that of CTP synthase from Idiomarina loihiensis (strain ATCC BAA-735 / DSM 15497 / L2-TR).